Consider the following 102-residue polypeptide: UPF0473 protein SAS1551 (102 aa).

It belongs to the UPF0473 family.

This chain is UPF0473 protein SAS1551, found in Staphylococcus aureus (strain MSSA476).